The chain runs to 283 residues: Acetylglutamate kinase (283 aa).

Residues 63 to 64 (GG), Arg-85, and Asn-178 each bind substrate.

It belongs to the acetylglutamate kinase family. ArgB subfamily.

It localises to the cytoplasm. The enzyme catalyses N-acetyl-L-glutamate + ATP = N-acetyl-L-glutamyl 5-phosphate + ADP. It functions in the pathway amino-acid biosynthesis; L-arginine biosynthesis; N(2)-acetyl-L-ornithine from L-glutamate: step 2/4. In terms of biological role, catalyzes the ATP-dependent phosphorylation of N-acetyl-L-glutamate. The sequence is that of Acetylglutamate kinase from Prochlorococcus marinus (strain MIT 9215).